A 586-amino-acid chain; its full sequence is MFS-type transporter ucsD (586 aa).

Positions 1 to 56 (MSRNSGTTLEDGPLHADPTTEAPNNATVTTNVTANDENTEKEVDADAAAAAPAEAP) are disordered. Composition is skewed to low complexity over residues 19–36 (TTEAPNNATVTTNVTAND) and 46–56 (DAAAAAPAEAP). Residues Asn25 and Asn31 are each glycosylated (N-linked (GlcNAc...) asparagine). Helical transmembrane passes span 65–85 (WAIVAALAFTALLSSLEGTII), 101–121 (SFIWVPNGYFLATIVMLPLMA), 131–151 (WLTLISVATFTLGSGICGGAN), 164–184 (GFGGGGIALMINIILTDLVPL), 192–212 (GIVQMVSAVGAALGPFLGGLL), 220–240 (WVFYINLPIGGTSLVALFFFL), 263–283 (AIFIASTVSVLIGVTWGGAVY), and 290–310 (VIVPLVLGFFGLGLFVVYEWT). Residue Asn324 is glycosylated (N-linked (GlcNAc...) asparagine). 6 helical membrane passes run 330–350 (VLGVTFLHTVATYWSFYFMPI), 368–388 (LPLFAGIFPFAILGGMLLAKF), 393–413 (PMHLIGMAIITLSFGLFSLLD), 420–440 (AWACFQLLFAVGAGLMIAILL), 458–478 (VWTFVRGFGTVWGVTIPSAIF), and 532–552 (LRTVWYVGVALAGFGWLLIWL).

It belongs to the major facilitator superfamily.

It localises to the membrane. MFS-type transporter; part of the gene cluster that mediates the biosynthesis of UCS1025A, a member of the pyrrolizidinone family that acts as a strong telomerase inhibitor and displays potent antibacterial and antitumor properties. These compounds share a hemiaminal-containing pyrrolizidinone core fused with a gamma-lactone, giving a furopyrrolizidine that is connected to a decalin fragment. The polypeptide is MFS-type transporter ucsD (Acremonium sp).